A 404-amino-acid chain; its full sequence is Cysteine desulfurase IscS (404 aa).

Pyridoxal 5'-phosphate-binding positions include 73–74, Asn-153, Gln-181, and 201–203; these read AT and SAH. Lys-204 bears the N6-(pyridoxal phosphate)lysine mark. Thr-241 contacts pyridoxal 5'-phosphate. The active-site Cysteine persulfide intermediate is the Cys-327. Cys-327 is a binding site for [2Fe-2S] cluster.

It belongs to the class-V pyridoxal-phosphate-dependent aminotransferase family. NifS/IscS subfamily. Homodimer. Forms a heterotetramer with IscU, interacts with other sulfur acceptors. Pyridoxal 5'-phosphate serves as cofactor.

Its subcellular location is the cytoplasm. It carries out the reaction (sulfur carrier)-H + L-cysteine = (sulfur carrier)-SH + L-alanine. It participates in cofactor biosynthesis; iron-sulfur cluster biosynthesis. Master enzyme that delivers sulfur to a number of partners involved in Fe-S cluster assembly, tRNA modification or cofactor biosynthesis. Catalyzes the removal of elemental sulfur atoms from cysteine to produce alanine. Functions as a sulfur delivery protein for Fe-S cluster synthesis onto IscU, an Fe-S scaffold assembly protein, as well as other S acceptor proteins. The chain is Cysteine desulfurase IscS from Anaeromyxobacter sp. (strain Fw109-5).